The sequence spans 373 residues: ATP-dependent 6-phosphofructokinase (373 aa).

Residues Gly12, Arg74–Asp75, and Gly110–Thr113 contribute to the ATP site. Residues Thr133–Asp135, Arg170, Met177–His179, Glu230, Arg291, and Tyr297–Arg300 contribute to the substrate site. Catalysis depends on Asp135, which acts as the Proton acceptor.

The protein belongs to the phosphofructokinase type A (PFKA) family. Mixed-substrate PFK group III subfamily. As to quaternary structure, homodimer or homotetramer. The cofactor is Mg(2+).

The protein localises to the cytoplasm. The catalysed reaction is beta-D-fructose 6-phosphate + ATP = beta-D-fructose 1,6-bisphosphate + ADP + H(+). Its pathway is carbohydrate degradation; glycolysis; D-glyceraldehyde 3-phosphate and glycerone phosphate from D-glucose: step 3/4. Its function is as follows. Catalyzes the phosphorylation of D-fructose 6-phosphate to fructose 1,6-bisphosphate by ATP, the first committing step of glycolysis. This chain is ATP-dependent 6-phosphofructokinase, found in Propionibacterium freudenreichii subsp. shermanii (strain ATCC 9614 / DSM 4902 / CIP 103027 / NCIMB 8099 / CIRM-BIA1).